The chain runs to 202 residues: LexA repressor (202 aa).

Residues 28–48 (RAEIAQRLGFRSPNAAEEHLK) constitute a DNA-binding region (H-T-H motif). Catalysis depends on for autocatalytic cleavage activity residues serine 119 and lysine 156.

This sequence belongs to the peptidase S24 family. As to quaternary structure, homodimer.

The enzyme catalyses Hydrolysis of Ala-|-Gly bond in repressor LexA.. Functionally, represses a number of genes involved in the response to DNA damage (SOS response), including recA and lexA. Binds to the 16 bp palindromic sequence 5'-CTGTATATATATACAG-3'. In the presence of single-stranded DNA, RecA interacts with LexA causing an autocatalytic cleavage which disrupts the DNA-binding part of LexA, leading to derepression of the SOS regulon and eventually DNA repair. This Salmonella agona (strain SL483) protein is LexA repressor.